The primary structure comprises 219 residues: Claudin-20 (219 aa).

Residues 1 to 7 (MASAGLQ) lie on the Cytoplasmic side of the membrane. The chain crosses the membrane as a helical span at residues 8-28 (LLAFILALSGVSGVLTATLLP). Over 29-81 (NWKVNVDVDSNIITAIVQLHGLWMDCTWYSTGMFSCALKHSILSLPIHVQAAR) the chain is Extracellular. A helical membrane pass occupies residues 82–102 (ATMVLACVLSALGICTSTVGM). The Cytoplasmic segment spans residues 103 to 118 (KCTRLGGDRETKSHAS). Residues 119–139 (FAGGVCFMSAGISSLISTVWY) form a helical membrane-spanning segment. The Extracellular segment spans residues 140–160 (TKEIIANFLDLTVPESNKHEP). A helical transmembrane segment spans residues 161–181 (GGAIYIGFISAMLLFISGMIF). Topologically, residues 182–219 (CTSCIKRNPEARLDPPTQQPISNTQLENNSTHNLKDYV) are cytoplasmic. Residues 193–219 (RLDPPTQQPISNTQLENNSTHNLKDYV) form a disordered region. Positions 200 to 213 (QPISNTQLENNSTH) are enriched in polar residues.

The protein belongs to the claudin family.

Its subcellular location is the cell junction. It localises to the tight junction. The protein localises to the cell membrane. In terms of biological role, plays a major role in tight junction-specific obliteration of the intercellular space, through calcium-independent cell-adhesion activity. This chain is Claudin-20 (CLDN20), found in Homo sapiens (Human).